The primary structure comprises 1706 residues: Bifunctional hemolysin/adenylate cyclase (1706 aa).

Positions 1-399 (MQQSHQAGYA…RRPSLGAVER (399 aa)) are a, catalytic. Position 349 to 356 (349 to 356 (AYGVAGKS)) interacts with ATP. Positions 383 to 405 (VPASPGLRRPSLGAVERQDSGYD) are disordered. The interval 400–912 (QDSGYDSLDG…LKHSIKLDVI (513 aa)) is b, Ala/Gly-rich. The interval 500–698 (LSAAVFGLGE…SVVGAPVAVV (199 aa)) is required for interaction with CyaC. 2 N6-palmitoyl lysine lipidation sites follow: K860 and K983. Residues 913 to 1656 (GGDGDDVVLA…RDADHRVEII (744 aa)) form a c region. Hemolysin-type calcium-binding repeat units lie at residues 1014-1031 (IGGAGNDSITGNAHDNFL), 1032-1049 (AGGSGDDRLDGGAGNDTL), 1050-1067 (VGGEGQNTVIGGAGDDVF), 1155-1172 (WGHDGNDTIRGRGGDDIL), 1173-1190 (RGGLGLDTLYGEDGNDIF), 1279-1296 (MGQGGDDTVRGGDGDDLL), 1297-1314 (FGGDGNDMLYGDAGNDTL), 1315-1332 (YGGLGDDTLEGGAGNDWF), 1335-1352 (TQAREHDVLRGGDGVDTV), 1411-1428 (TGDAQANVLRGAGGADVL), 1429-1446 (AGGEGDDVLLGGDGDDQL), 1447-1464 (SGDAGRDRLYGEAGDDWF), 1468-1484 (AANAGNLLDGGDGRDTV), 1537-1554 (IGDAGANVLNGLAGNDVL), 1555-1572 (SGGAGDDVLLGDEGSDLL), 1573-1590 (SGDAGNDDLFGGQGDDTY), and 1603-1620 (ESGGGHDTIRINAGADQL). The segment at 1657–1706 (HAANQAVDQAGIEKLVEAMAQYPDPGAAAAAPPAARVPDTLMQSLAVNWR) is d, Asp/Gly-rich.

This sequence in the N-terminal section; belongs to the adenylyl cyclase class-2 family. In the C-terminal section; belongs to the RTX prokaryotic toxin family. Released in a processed form. In terms of processing, palmitoylated at Lys-860 and Lys-983 by CyaC. The toxin only becomes active when modified in position Lys-983: palmitoylation is required for efficient membrane insertion and pore formation of the acylated Hemolysin chain.

The protein localises to the secreted. Its subcellular location is the host cell membrane. The enzyme catalyses ATP = 3',5'-cyclic AMP + diphosphate. Activated by host calmodulin. In terms of biological role, bifunctional adenylate cyclase toxin-hemolysin that plays a crucial role in host colonization. It causes whooping cough by acting on mammalian cells by elevating cAMP-concentration and thus disrupts normal cell function. Adenylate cyclase that is activated by host intracellular calmodulin and catalyzes un-regulated conversion of ATP to cAMP, thereby impairing microbicidal functions of immune effector cells and inducing apoptosis of lung macrophages. Its function is as follows. Hemolysin that forms small cation-selective membrane channels, leading to hemolytic activity. The hemolytic activity of CyaA is weak compared with that of the HlyA of E.coli. The sequence is that of Bifunctional hemolysin/adenylate cyclase (cya) from Bordetella pertussis (strain Tohama I / ATCC BAA-589 / NCTC 13251).